A 309-amino-acid chain; its full sequence is Ras-like protein 1 (309 aa).

GTP contacts are provided by residues 20-25, 36-42, 66-67, 123-126, and 153-155; these read GVGKSA, VDEYDPT, AG, NKLD, and SAK. The Effector region signature appears at 39–47; the sequence is YDPTIEDSY. The interval 177–303 is disordered; it reads KYNSMNRQLD…SANARKESSG (127 aa). Polar residues-rich tracts occupy residues 179–188 and 209–235; these read NSMNRQLDNT and NGSYVLDNSLTNAGTGSSSKSAVNHNG. Positions 236 to 245 are enriched in basic and acidic residues; sequence ETTKRTDEKN. Residues 246–256 are compositionally biased toward low complexity; sequence YVNQNNNNEGN. Positions 257–296 are enriched in polar residues; sequence TKYSSNGNGNRSDISRGNQNNALNSRSKQSAEPQKNSSAN. Cys-305 is lipidated: S-palmitoyl cysteine. Cysteine methyl ester is present on Cys-306. A lipid anchor (S-farnesyl cysteine) is attached at Cys-306. Residues 307–309 constitute a propeptide, removed in mature form; the sequence is IIC.

Belongs to the small GTPase superfamily. Ras family. Farnesylated by RAM1-RAM2, which is required for targeting RAS1 to the cytoplasmic site of the endoplasmic reticulum, where proteolytic processing of the C-terminus by RCE1 and methylation of the resulting carboxyl group by STE14 occurs. Post-translationally, palmitoylated by the ERF2-SHR5 complex, which is required for proper plasma membrane localization of RAS1.

It localises to the cell membrane. It catalyses the reaction GTP + H2O = GDP + phosphate + H(+). Alternates between an inactive form bound to GDP and an active form bound to GTP. Activated by guanine nucleotide-exchange factor (GEF) CDC25 and inactivated by GTPase-activating proteins (GAPs) IRA1 and IRA2. The S.cerevisiae Ras proteins modulate the activity of the adenylate cyclase catalytic subunit and therefore affect the biosynthesis of cyclic-AMP. The chain is Ras-like protein 1 (RAS1) from Saccharomyces cerevisiae (strain ATCC 204508 / S288c) (Baker's yeast).